Reading from the N-terminus, the 649-residue chain is Acetyl-coenzyme A synthetase (649 aa).

Residues 191-194, Thr-312, and Asn-336 contribute to the CoA site; that span reads RGGR. ATP contacts are provided by residues 388–390, 412–417, Asp-501, and Arg-516; these read GEP and DTWWQT. Ser-524 contributes to the CoA binding site. Arg-527 contacts ATP. Positions 538, 540, and 543 each coordinate Mg(2+). Arg-585 is a binding site for CoA. Position 610 is an N6-acetyllysine (Lys-610).

Belongs to the ATP-dependent AMP-binding enzyme family. Mg(2+) is required as a cofactor. Acetylated. Deacetylation by the SIR2-homolog deacetylase activates the enzyme.

The enzyme catalyses acetate + ATP + CoA = acetyl-CoA + AMP + diphosphate. In terms of biological role, catalyzes the conversion of acetate into acetyl-CoA (AcCoA), an essential intermediate at the junction of anabolic and catabolic pathways. AcsA undergoes a two-step reaction. In the first half reaction, AcsA combines acetate with ATP to form acetyl-adenylate (AcAMP) intermediate. In the second half reaction, it can then transfer the acetyl group from AcAMP to the sulfhydryl group of CoA, forming the product AcCoA. This chain is Acetyl-coenzyme A synthetase, found in Marinobacter nauticus (strain ATCC 700491 / DSM 11845 / VT8) (Marinobacter aquaeolei).